Reading from the N-terminus, the 168-residue chain is Prolyl-tRNA synthetase associated domain-containing protein 1 (168 aa).

Belongs to the PRORSD1 family.

This is Prolyl-tRNA synthetase associated domain-containing protein 1 (prorsd1p) from Xenopus laevis (African clawed frog).